The sequence spans 148 residues: MKLDVQILDARLHEQLPQYATPGSAGLDLRACLDAPLTLEPGSTHLIPTGMAIHLADPGYAALILPRSGMGHKHGIVLGNLVGLIDSDYQGQLMISTWNRGDTAFVLNPMERLAQLVIVPVVQAELNIVDAFAESERGAGGFGSTGRH.

Substrate is bound by residues 67 to 69 (RSG), N80, 84 to 86 (LID), and M94.

Belongs to the dUTPase family. Mg(2+) serves as cofactor.

The enzyme catalyses dUTP + H2O = dUMP + diphosphate + H(+). Its pathway is pyrimidine metabolism; dUMP biosynthesis; dUMP from dCTP (dUTP route): step 2/2. Its function is as follows. This enzyme is involved in nucleotide metabolism: it produces dUMP, the immediate precursor of thymidine nucleotides and it decreases the intracellular concentration of dUTP so that uracil cannot be incorporated into DNA. In Ralstonia nicotianae (strain ATCC BAA-1114 / GMI1000) (Ralstonia solanacearum), this protein is Deoxyuridine 5'-triphosphate nucleotidohydrolase.